Here is a 329-residue protein sequence, read N- to C-terminus: Ribosome biogenesis regulatory protein homolog (329 aa).

Disordered stretches follow at residues 227-248 (KANIKTGKKRKFESNEAPVSAE) and 262-329 (KKAK…NKRK). Residues 278-295 (LREKKEKQEKKGAKEATR) are compositionally biased toward basic and acidic residues. Basic residues predominate over residues 320 to 329 (AKKKGANKRK).

This sequence belongs to the RRS1 family.

The protein resides in the nucleus. Its subcellular location is the nucleolus. Involved in ribosomal large subunit assembly. The protein is Ribosome biogenesis regulatory protein homolog of Caenorhabditis briggsae.